The sequence spans 952 residues: Isoleucine--tRNA ligase (952 aa).

A 'HIGH' region motif is present at residues 58–68; sequence PYANGDIHIGH. Glu576 is an L-isoleucyl-5'-AMP binding site. The 'KMSKS' region motif lies at 617-621; it reads KMSKS. ATP is bound at residue Lys620. Residues Cys915, Cys918, Cys935, and Cys938 each contribute to the Zn(2+) site.

It belongs to the class-I aminoacyl-tRNA synthetase family. IleS type 1 subfamily. In terms of assembly, monomer. Zn(2+) is required as a cofactor.

Its subcellular location is the cytoplasm. It catalyses the reaction tRNA(Ile) + L-isoleucine + ATP = L-isoleucyl-tRNA(Ile) + AMP + diphosphate. Catalyzes the attachment of isoleucine to tRNA(Ile). As IleRS can inadvertently accommodate and process structurally similar amino acids such as valine, to avoid such errors it has two additional distinct tRNA(Ile)-dependent editing activities. One activity is designated as 'pretransfer' editing and involves the hydrolysis of activated Val-AMP. The other activity is designated 'posttransfer' editing and involves deacylation of mischarged Val-tRNA(Ile). This Aliivibrio fischeri (strain MJ11) (Vibrio fischeri) protein is Isoleucine--tRNA ligase.